We begin with the raw amino-acid sequence, 638 residues long: 1-deoxy-D-xylulose-5-phosphate synthase (638 aa).

Thiamine diphosphate contacts are provided by residues His-75 and 116–118; that span reads AHS. Asp-147 lines the Mg(2+) pocket. Thiamine diphosphate is bound by residues 148–149, Asn-177, Tyr-288, and Glu-370; that span reads GA. Asn-177 lines the Mg(2+) pocket.

Belongs to the transketolase family. DXPS subfamily. As to quaternary structure, homodimer. The cofactor is Mg(2+). Thiamine diphosphate is required as a cofactor.

It catalyses the reaction D-glyceraldehyde 3-phosphate + pyruvate + H(+) = 1-deoxy-D-xylulose 5-phosphate + CO2. It functions in the pathway metabolic intermediate biosynthesis; 1-deoxy-D-xylulose 5-phosphate biosynthesis; 1-deoxy-D-xylulose 5-phosphate from D-glyceraldehyde 3-phosphate and pyruvate: step 1/1. Its function is as follows. Catalyzes the acyloin condensation reaction between C atoms 2 and 3 of pyruvate and glyceraldehyde 3-phosphate to yield 1-deoxy-D-xylulose-5-phosphate (DXP). This Cupriavidus necator (strain ATCC 17699 / DSM 428 / KCTC 22496 / NCIMB 10442 / H16 / Stanier 337) (Ralstonia eutropha) protein is 1-deoxy-D-xylulose-5-phosphate synthase.